Here is an 86-residue protein sequence, read N- to C-terminus: UPF0457 protein SERP1772 (86 aa).

Belongs to the UPF0457 family.

In Staphylococcus epidermidis (strain ATCC 35984 / DSM 28319 / BCRC 17069 / CCUG 31568 / BM 3577 / RP62A), this protein is UPF0457 protein SERP1772.